Consider the following 225-residue polypeptide: Small ribosomal subunit protein uS3 (225 aa).

A KH type-2 domain is found at valine 16 to lysine 85. The interval glycine 200–serine 225 is disordered. The span at glutamate 208 to arginine 217 shows a compositional bias: basic and acidic residues.

This sequence belongs to the universal ribosomal protein uS3 family. Part of the 30S ribosomal subunit.

Binds the lower part of the 30S subunit head. The chain is Small ribosomal subunit protein uS3 from Thermoplasma volcanium (strain ATCC 51530 / DSM 4299 / JCM 9571 / NBRC 15438 / GSS1).